Reading from the N-terminus, the 1025-residue chain is Multidrug resistance protein MdtC (1025 aa).

12 consecutive transmembrane segments (helical) span residues 3–23 (FFAL…AITL), 333–353 (EVEQ…FLFL), 360–380 (IIPA…MYLC), 387–407 (LSLM…IVVL), 431–451 (VGFT…PLLL), 463–483 (FAVT…TLTP), 528–548 (LVGV…ISIP), 853–873 (VILI…LYES), 875–895 (VHPL…LLAL), 897–917 (LFNA…IGIV), 953–973 (PIMM…LSGG), and 984–1004 (ITIV…TPVV).

It belongs to the resistance-nodulation-cell division (RND) (TC 2.A.6) family. MdtC subfamily. As to quaternary structure, part of a tripartite efflux system composed of MdtA, MdtB and MdtC. MdtC forms a heteromultimer with MdtB.

The protein localises to the cell inner membrane. In terms of biological role, the MdtABC tripartite complex confers resistance against novobiocin and deoxycholate. This chain is Multidrug resistance protein MdtC, found in Escherichia coli O127:H6 (strain E2348/69 / EPEC).